A 217-amino-acid polypeptide reads, in one-letter code: Cytidylate kinase (217 aa).

10 to 18 (GPAGAGKST) contacts ATP.

This sequence belongs to the cytidylate kinase family. Type 1 subfamily.

Its subcellular location is the cytoplasm. The enzyme catalyses CMP + ATP = CDP + ADP. The catalysed reaction is dCMP + ATP = dCDP + ADP. The polypeptide is Cytidylate kinase (Clostridium botulinum (strain Loch Maree / Type A3)).